A 917-amino-acid chain; its full sequence is Translation initiation factor IF-2 (917 aa).

Disordered regions lie at residues 1–84 (MSDG…GRAG) and 150–318 (KESE…DRER). A compositionally biased stretch (polar residues) spans 10-27 (DGNNTPSQGGEQTRSSRL). Low complexity-rich tracts occupy residues 69-84 (AAGP…GRAG), 154-177 (QQAA…AAEA), and 227-236 (SRPAAAAPAR). Positions 265 to 274 (GAPPAPPRRP) are enriched in pro residues. A compositionally biased stretch (basic and acidic residues) spans 282-305 (GGSDRRSGRIDVRAAIEGDDDKTR). Residues 416 to 586 (PRAPVVTVMG…LLQSEMLDLK (171 aa)) form the tr-type G domain. Residues 425 to 432 (GHVDHGKT) are G1. Residue 425–432 (GHVDHGKT) participates in GTP binding. The interval 450 to 454 (GITQH) is G2. The interval 472 to 475 (DTPG) is G3. GTP contacts are provided by residues 472–476 (DTPGH) and 526–529 (NKID). Residues 526–529 (NKID) are G4. Residues 562–564 (SAL) are G5.

This sequence belongs to the TRAFAC class translation factor GTPase superfamily. Classic translation factor GTPase family. IF-2 subfamily.

It localises to the cytoplasm. One of the essential components for the initiation of protein synthesis. Protects formylmethionyl-tRNA from spontaneous hydrolysis and promotes its binding to the 30S ribosomal subunits. Also involved in the hydrolysis of GTP during the formation of the 70S ribosomal complex. This chain is Translation initiation factor IF-2, found in Gluconobacter oxydans (strain 621H) (Gluconobacter suboxydans).